Consider the following 394-residue polypeptide: 1-deoxy-D-xylulose 5-phosphate reductoisomerase (394 aa).

NADPH-binding residues include Thr12, Gly13, Ser14, Ile15, Gly38, Asn41, and Asn132. Lys133 is a 1-deoxy-D-xylulose 5-phosphate binding site. Position 134 (Glu134) interacts with NADPH. Position 156 (Asp156) interacts with Mn(2+). 1-deoxy-D-xylulose 5-phosphate is bound by residues Ser157, Glu158, Ser182, and His205. Position 158 (Glu158) interacts with Mn(2+). Gly211 contributes to the NADPH binding site. 1-deoxy-D-xylulose 5-phosphate contacts are provided by Ser218, Asn223, Lys224, and Glu227. Glu227 contributes to the Mn(2+) binding site.

The protein belongs to the DXR family. Mg(2+) serves as cofactor. Mn(2+) is required as a cofactor.

It catalyses the reaction 2-C-methyl-D-erythritol 4-phosphate + NADP(+) = 1-deoxy-D-xylulose 5-phosphate + NADPH + H(+). Its pathway is isoprenoid biosynthesis; isopentenyl diphosphate biosynthesis via DXP pathway; isopentenyl diphosphate from 1-deoxy-D-xylulose 5-phosphate: step 1/6. Catalyzes the NADPH-dependent rearrangement and reduction of 1-deoxy-D-xylulose-5-phosphate (DXP) to 2-C-methyl-D-erythritol 4-phosphate (MEP). The sequence is that of 1-deoxy-D-xylulose 5-phosphate reductoisomerase from Arthrobacter sp. (strain FB24).